We begin with the raw amino-acid sequence, 276 residues long: Dermonecrotic toxin LlSicTox-alphaIV2iv (276 aa).

The active site involves His-5. Positions 25 and 27 each coordinate Mg(2+). His-41 functions as the Nucleophile in the catalytic mechanism. Disulfide bonds link Cys-45/Cys-51 and Cys-47/Cys-193. Residue Asp-85 participates in Mg(2+) binding.

Belongs to the arthropod phospholipase D family. Class II subfamily. Mg(2+) serves as cofactor. Expressed by the venom gland.

It localises to the secreted. It catalyses the reaction an N-(acyl)-sphingosylphosphocholine = an N-(acyl)-sphingosyl-1,3-cyclic phosphate + choline. The catalysed reaction is an N-(acyl)-sphingosylphosphoethanolamine = an N-(acyl)-sphingosyl-1,3-cyclic phosphate + ethanolamine. It carries out the reaction a 1-acyl-sn-glycero-3-phosphocholine = a 1-acyl-sn-glycero-2,3-cyclic phosphate + choline. The enzyme catalyses a 1-acyl-sn-glycero-3-phosphoethanolamine = a 1-acyl-sn-glycero-2,3-cyclic phosphate + ethanolamine. Its function is as follows. Dermonecrotic toxins cleave the phosphodiester linkage between the phosphate and headgroup of certain phospholipids (sphingolipid and lysolipid substrates), forming an alcohol (often choline) and a cyclic phosphate. This toxin acts on sphingomyelin (SM). It may also act on ceramide phosphoethanolamine (CPE), lysophosphatidylcholine (LPC) and lysophosphatidylethanolamine (LPE), but not on lysophosphatidylserine (LPS), and lysophosphatidylglycerol (LPG). It acts by transphosphatidylation, releasing exclusively cyclic phosphate products as second products. Induces dermonecrosis, hemolysis, increased vascular permeability, edema, inflammatory response, and platelet aggregation. The chain is Dermonecrotic toxin LlSicTox-alphaIV2iv from Loxosceles laeta (South American recluse spider).